Here is a 335-residue protein sequence, read N- to C-terminus: DNA-directed RNA polymerase subunit alpha (335 aa).

An alpha N-terminal domain (alpha-NTD) region spans residues 1–233; it reads MIRDKISVSI…DLFIPFLHGE (233 aa). The alpha C-terminal domain (alpha-CTD) stretch occupies residues 264–335; that stretch reads KEKIAFKHIF…KRFAIDPPRN (72 aa).

This sequence belongs to the RNA polymerase alpha chain family. In terms of assembly, in plastids the minimal PEP RNA polymerase catalytic core is composed of four subunits: alpha, beta, beta', and beta''. When a (nuclear-encoded) sigma factor is associated with the core the holoenzyme is formed, which can initiate transcription.

It is found in the plastid. It localises to the chloroplast. The enzyme catalyses RNA(n) + a ribonucleoside 5'-triphosphate = RNA(n+1) + diphosphate. DNA-dependent RNA polymerase catalyzes the transcription of DNA into RNA using the four ribonucleoside triphosphates as substrates. The sequence is that of DNA-directed RNA polymerase subunit alpha from Pinus koraiensis (Korean pine).